A 123-amino-acid chain; its full sequence is Ribonuclease P protein component (123 aa).

It belongs to the RnpA family. As to quaternary structure, consists of a catalytic RNA component (M1 or rnpB) and a protein subunit.

It catalyses the reaction Endonucleolytic cleavage of RNA, removing 5'-extranucleotides from tRNA precursor.. In terms of biological role, RNaseP catalyzes the removal of the 5'-leader sequence from pre-tRNA to produce the mature 5'-terminus. It can also cleave other RNA substrates such as 4.5S RNA. The protein component plays an auxiliary but essential role in vivo by binding to the 5'-leader sequence and broadening the substrate specificity of the ribozyme. The protein is Ribonuclease P protein component of Bordetella bronchiseptica (strain ATCC BAA-588 / NCTC 13252 / RB50) (Alcaligenes bronchisepticus).